Here is a 292-residue protein sequence, read N- to C-terminus: NAD kinase (292 aa).

The Proton acceptor role is filled by Asp73. Residues 73 to 74 (DG), 147 to 148 (NE), His158, Arg175, Asp177, 188 to 193 (TAYSLS), and Gln247 contribute to the NAD(+) site.

The protein belongs to the NAD kinase family. A divalent metal cation serves as cofactor.

It localises to the cytoplasm. It carries out the reaction NAD(+) + ATP = ADP + NADP(+) + H(+). Involved in the regulation of the intracellular balance of NAD and NADP, and is a key enzyme in the biosynthesis of NADP. Catalyzes specifically the phosphorylation on 2'-hydroxyl of the adenosine moiety of NAD to yield NADP. This is NAD kinase from Shigella boydii serotype 4 (strain Sb227).